The sequence spans 171 residues: MSTEQELQIGKVVKSHGIRGEVVVELSTDDPDIRFAIGEVLNGKQAGKEHSLTIDAARMHQGRLLVKFAEVPDRTAADSLRGTRFFAAPLEDEDDEDGFYDHELEGLRVIHEGEDIGEVTGVMHGPAGEILEVRLTSGKETLIPFVHAIVPEVDLEEGTATITPPEGLLDL.

Positions 96-168 (EDGFYDHELE…TATITPPEGL (73 aa)) constitute a PRC barrel domain.

The protein belongs to the RimM family. In terms of assembly, binds ribosomal protein uS19.

It is found in the cytoplasm. Its function is as follows. An accessory protein needed during the final step in the assembly of 30S ribosomal subunit, possibly for assembly of the head region. Essential for efficient processing of 16S rRNA. May be needed both before and after RbfA during the maturation of 16S rRNA. It has affinity for free ribosomal 30S subunits but not for 70S ribosomes. This chain is Ribosome maturation factor RimM, found in Corynebacterium glutamicum (strain ATCC 13032 / DSM 20300 / JCM 1318 / BCRC 11384 / CCUG 27702 / LMG 3730 / NBRC 12168 / NCIMB 10025 / NRRL B-2784 / 534).